The chain runs to 305 residues: Acetyl-coenzyme A carboxylase carboxyl transferase subunit beta (305 aa).

A CoA carboxyltransferase N-terminal domain is found at 27–296 (LWVKCSSCRE…SPAKAELAGR (270 aa)). Cys-31, Cys-34, Cys-50, and Cys-53 together coordinate Zn(2+). The C4-type zinc finger occupies 31 to 53 (CSSCRELIYKKQLNDNLKVCPKC).

It belongs to the AccD/PCCB family. As to quaternary structure, acetyl-CoA carboxylase is a heterohexamer composed of biotin carboxyl carrier protein (AccB), biotin carboxylase (AccC) and two subunits each of ACCase subunit alpha (AccA) and ACCase subunit beta (AccD). Zn(2+) is required as a cofactor.

It is found in the cytoplasm. The catalysed reaction is N(6)-carboxybiotinyl-L-lysyl-[protein] + acetyl-CoA = N(6)-biotinyl-L-lysyl-[protein] + malonyl-CoA. The protein operates within lipid metabolism; malonyl-CoA biosynthesis; malonyl-CoA from acetyl-CoA: step 1/1. Functionally, component of the acetyl coenzyme A carboxylase (ACC) complex. Biotin carboxylase (BC) catalyzes the carboxylation of biotin on its carrier protein (BCCP) and then the CO(2) group is transferred by the transcarboxylase to acetyl-CoA to form malonyl-CoA. The chain is Acetyl-coenzyme A carboxylase carboxyl transferase subunit beta from Chloroflexus aurantiacus (strain ATCC 29366 / DSM 635 / J-10-fl).